The primary structure comprises 215 residues: Ribonuclease T (215 aa).

Residues 20-194 (VVIDVETAGF…YDTEQTAQLF (175 aa)) form the Exonuclease domain. The Mg(2+) site is built by Asp-23, Glu-25, His-181, and Asp-186. Residue His-181 is the Proton donor/acceptor of the active site.

Belongs to the RNase T family. As to quaternary structure, homodimer. Mg(2+) serves as cofactor.

In terms of biological role, trims short 3' overhangs of a variety of RNA species, leaving a one or two nucleotide 3' overhang. Responsible for the end-turnover of tRNA: specifically removes the terminal AMP residue from uncharged tRNA (tRNA-C-C-A). Also appears to be involved in tRNA biosynthesis. The chain is Ribonuclease T from Klebsiella pneumoniae subsp. pneumoniae (strain ATCC 700721 / MGH 78578).